The following is a 736-amino-acid chain: Phosphoribosylformylglycinamidine synthase subunit PurL (736 aa).

The active site involves His49. 2 residues coordinate ATP: Tyr52 and Lys91. Glu93 contributes to the Mg(2+) binding site. Substrate is bound by residues 94 to 97 (SHNH) and Arg116. The Proton acceptor role is filled by His95. A Mg(2+)-binding site is contributed by Asp117. Residue Gln240 coordinates substrate. Mg(2+) is bound at residue Asp268. Residue 312-314 (ESQ) coordinates substrate. Positions 493 and 530 each coordinate ATP. Asn531 is a binding site for Mg(2+). Ser533 is a binding site for substrate.

Belongs to the FGAMS family. In terms of assembly, monomer. Part of the FGAM synthase complex composed of 1 PurL, 1 PurQ and 2 PurS subunits.

Its subcellular location is the cytoplasm. It carries out the reaction N(2)-formyl-N(1)-(5-phospho-beta-D-ribosyl)glycinamide + L-glutamine + ATP + H2O = 2-formamido-N(1)-(5-O-phospho-beta-D-ribosyl)acetamidine + L-glutamate + ADP + phosphate + H(+). It participates in purine metabolism; IMP biosynthesis via de novo pathway; 5-amino-1-(5-phospho-D-ribosyl)imidazole from N(2)-formyl-N(1)-(5-phospho-D-ribosyl)glycinamide: step 1/2. In terms of biological role, part of the phosphoribosylformylglycinamidine synthase complex involved in the purines biosynthetic pathway. Catalyzes the ATP-dependent conversion of formylglycinamide ribonucleotide (FGAR) and glutamine to yield formylglycinamidine ribonucleotide (FGAM) and glutamate. The FGAM synthase complex is composed of three subunits. PurQ produces an ammonia molecule by converting glutamine to glutamate. PurL transfers the ammonia molecule to FGAR to form FGAM in an ATP-dependent manner. PurS interacts with PurQ and PurL and is thought to assist in the transfer of the ammonia molecule from PurQ to PurL. This chain is Phosphoribosylformylglycinamidine synthase subunit PurL, found in Rhodopseudomonas palustris (strain HaA2).